The sequence spans 366 residues: Phospho-N-acetylmuramoyl-pentapeptide-transferase (366 aa).

The next 10 helical transmembrane spans lie at Ala-27–Leu-47, Thr-71–Ala-91, Leu-93–Phe-113, Leu-134–Ile-154, Ala-174–Gly-194, Gly-205–Ala-225, Leu-245–Pro-265, Ala-268–Val-288, Ile-294–Val-314, and Gln-343–Leu-363.

It belongs to the glycosyltransferase 4 family. MraY subfamily. Mg(2+) serves as cofactor.

The protein resides in the cell inner membrane. The enzyme catalyses UDP-N-acetyl-alpha-D-muramoyl-L-alanyl-gamma-D-glutamyl-meso-2,6-diaminopimeloyl-D-alanyl-D-alanine + di-trans,octa-cis-undecaprenyl phosphate = di-trans,octa-cis-undecaprenyl diphospho-N-acetyl-alpha-D-muramoyl-L-alanyl-D-glutamyl-meso-2,6-diaminopimeloyl-D-alanyl-D-alanine + UMP. The protein operates within cell wall biogenesis; peptidoglycan biosynthesis. Functionally, catalyzes the initial step of the lipid cycle reactions in the biosynthesis of the cell wall peptidoglycan: transfers peptidoglycan precursor phospho-MurNAc-pentapeptide from UDP-MurNAc-pentapeptide onto the lipid carrier undecaprenyl phosphate, yielding undecaprenyl-pyrophosphoryl-MurNAc-pentapeptide, known as lipid I. The chain is Phospho-N-acetylmuramoyl-pentapeptide-transferase from Allorhizobium ampelinum (strain ATCC BAA-846 / DSM 112012 / S4) (Agrobacterium vitis (strain S4)).